Consider the following 379-residue polypeptide: Cytochrome b (379 aa).

Transmembrane regions (helical) follow at residues 33-53, 77-98, 113-133, and 178-198; these read FGSLLGMCLMIQILTGLFLAM, WLIRYLHANGASMFFICLFIHV, WNIGIILFLMTMATAFVGYVL, and FFAFHFILPFIIAAFALVHLL. His-83 and His-97 together coordinate heme b. His-182 and His-196 together coordinate heme b. A ubiquinone is bound at residue His-201. 4 helical membrane passes run 226–246, 288–308, 320–340, and 347–367; these read TKDLLGIFLLLLVLMILALFF, LGGVLALILSILILAAFPLLN, VTQVIYWIFTANLLVLTWIGG, and FTMIGQIASITYLAIIIILMP.

The protein belongs to the cytochrome b family. In terms of assembly, the cytochrome bc1 complex contains 11 subunits: 3 respiratory subunits (MT-CYB, CYC1 and UQCRFS1), 2 core proteins (UQCRC1 and UQCRC2) and 6 low-molecular weight proteins (UQCRH/QCR6, UQCRB/QCR7, UQCRQ/QCR8, UQCR10/QCR9, UQCR11/QCR10 and a cleavage product of UQCRFS1). This cytochrome bc1 complex then forms a dimer. Heme b serves as cofactor.

It is found in the mitochondrion inner membrane. In terms of biological role, component of the ubiquinol-cytochrome c reductase complex (complex III or cytochrome b-c1 complex) that is part of the mitochondrial respiratory chain. The b-c1 complex mediates electron transfer from ubiquinol to cytochrome c. Contributes to the generation of a proton gradient across the mitochondrial membrane that is then used for ATP synthesis. The protein is Cytochrome b (MT-CYB) of Akodon kofordi (Koford's grass mouse).